A 247-amino-acid polypeptide reads, in one-letter code: Mast cell protease 8 (247 aa).

An N-terminal signal peptide occupies residues 1-19 (MFLLLVLLVAALPVNAEGG). Glu20 is a propeptide (activation peptide). A Peptidase S1 domain is found at 21–242 (IIWGTESKPH…FMPWIRKTMK (222 aa)). Asn41 is a glycosylation site (N-linked (GlcNAc...) asparagine). Cys49 and Cys65 form a disulfide bridge. Residue His64 is the Charge relay system of the active site. N-linked (GlcNAc...) asparagine glycans are attached at residues Asn71 and Asn101. Asp107 acts as the Charge relay system in catalysis. Cystine bridges form between Cys141-Cys206 and Cys171-Cys185. N-linked (GlcNAc...) asparagine glycosylation is found at Asn151 and Asn179. The active-site Charge relay system is Ser200.

The protein belongs to the peptidase S1 family. Granzyme subfamily.

Its subcellular location is the secreted. It is found in the cytoplasmic granule. This Mus musculus (Mouse) protein is Mast cell protease 8 (Mcpt8).